Reading from the N-terminus, the 91-residue chain is MARVTVQDAVEKIGNRFDLVLVAARRARQMQVGGKDPLVPEENDKSTVIALREIEEGLITNQILDVRDRQEQHEQEAAELQAVTAIAEGRR.

Belongs to the RNA polymerase subunit omega family. In terms of assembly, the RNAP catalytic core consists of 2 alpha, 1 beta, 1 beta' and 1 omega subunit. When a sigma factor is associated with the core the holoenzyme is formed, which can initiate transcription.

It carries out the reaction RNA(n) + a ribonucleoside 5'-triphosphate = RNA(n+1) + diphosphate. Its function is as follows. Promotes RNA polymerase assembly. Latches the N- and C-terminal regions of the beta' subunit thereby facilitating its interaction with the beta and alpha subunits. This Erwinia tasmaniensis (strain DSM 17950 / CFBP 7177 / CIP 109463 / NCPPB 4357 / Et1/99) protein is DNA-directed RNA polymerase subunit omega.